A 279-amino-acid chain; its full sequence is Tryptophan synthase alpha chain (279 aa).

Catalysis depends on proton acceptor residues glutamate 50 and aspartate 61.

It belongs to the TrpA family. Tetramer of two alpha and two beta chains.

The enzyme catalyses (1S,2R)-1-C-(indol-3-yl)glycerol 3-phosphate + L-serine = D-glyceraldehyde 3-phosphate + L-tryptophan + H2O. Its pathway is amino-acid biosynthesis; L-tryptophan biosynthesis; L-tryptophan from chorismate: step 5/5. The alpha subunit is responsible for the aldol cleavage of indoleglycerol phosphate to indole and glyceraldehyde 3-phosphate. This chain is Tryptophan synthase alpha chain, found in Rhizobium johnstonii (strain DSM 114642 / LMG 32736 / 3841) (Rhizobium leguminosarum bv. viciae).